The chain runs to 860 residues: Leucine--tRNA ligase (860 aa).

A 'HIGH' region motif is present at residues 73–83 (VLQPIGWDAFG). The short motif at 650–654 (SPADM) is the 'KMSKS' region element. An ATP-binding site is contributed by Asp-653.

Belongs to the class-I aminoacyl-tRNA synthetase family.

The protein localises to the cytoplasm. The catalysed reaction is tRNA(Leu) + L-leucine + ATP = L-leucyl-tRNA(Leu) + AMP + diphosphate. The polypeptide is Leucine--tRNA ligase (Shigella flexneri).